The following is a 580-amino-acid chain: Formate--tetrahydrofolate ligase (580 aa).

Residue 65–72 (TPHGEGKT) coordinates ATP.

This sequence belongs to the formate--tetrahydrofolate ligase family.

It catalyses the reaction (6S)-5,6,7,8-tetrahydrofolate + formate + ATP = (6R)-10-formyltetrahydrofolate + ADP + phosphate. Its pathway is one-carbon metabolism; tetrahydrofolate interconversion. This Shewanella baltica (strain OS223) protein is Formate--tetrahydrofolate ligase.